We begin with the raw amino-acid sequence, 122 residues long: Large ribosomal subunit protein bL12 (122 aa).

This sequence belongs to the bacterial ribosomal protein bL12 family. Homodimer. Part of the ribosomal stalk of the 50S ribosomal subunit. Forms a multimeric L10(L12)X complex, where L10 forms an elongated spine to which 2 to 4 L12 dimers bind in a sequential fashion. Binds GTP-bound translation factors.

Its function is as follows. Forms part of the ribosomal stalk which helps the ribosome interact with GTP-bound translation factors. Is thus essential for accurate translation. The sequence is that of Large ribosomal subunit protein bL12 from Deinococcus radiodurans (strain ATCC 13939 / DSM 20539 / JCM 16871 / CCUG 27074 / LMG 4051 / NBRC 15346 / NCIMB 9279 / VKM B-1422 / R1).